Here is a 193-residue protein sequence, read N- to C-terminus: Putative kinase protein 029R (193 aa).

9 to 17 (GIIGSGKSS) provides a ligand contact to ATP. Glu31, Tyr43, and Gln54 together coordinate substrate. Glu78 (proton acceptor) is an active-site residue. Residues Arg79 and Glu142 each contribute to the substrate site.

It belongs to the DCK/DGK family.

This chain is Putative kinase protein 029R, found in Aedes vexans (Inland floodwater mosquito).